We begin with the raw amino-acid sequence, 412 residues long: MERIPSAQPPPTCLPKAPGLEPGDLSGMDFAHMYQVYKSRRGIKRSEDSKETYKLPHRLIEKKRRDRINECIAQLKDLLPEHLKLTTLGHLEKAVVLELTLKHVKALTNLIDQQQQKIIALQSGLQAGDLSGRNVEAGQEMFCSGFQTCAREVLQYLAKHENTRDLKSSQLVTHLHRVVSELLQGGTSRKPSDPAPKAMDFKEKPSSLAKGSEGPGKNCVPVIQRTFAHSSGEQSGSDTDTDSGYGGESEKSELRVEQPYFKSDHGRRFTMGERISAIKQESEEPPMKKSRMQLSDDEGPFTSTDLISSPFLGPHPHQPPFCLPFYLIPPSATAYLPMLEKCWYPTSVPVLYQGLNASAAALSSFMNPDKISAPLLMPQRLPSPLPTHPAIDSSALLQALKQIPPLNLETKD.

A disordered region spans residues 1–21; the sequence is MERIPSAQPPPTCLPKAPGLE. The tract at residues 1–139 is essential for interaction with BMAL1, E-box binding and repressor activity against the CLOCK-BMAL1 heterodimer; it reads MERIPSAQPP…LSGRNVEAGQ (139 aa). Residues 52–107 enclose the bHLH domain; that stretch reads TYKLPHRLIEKKRRDRINECIAQLKDLLPEHLKLTTLGHLEKAVVLELTLKHVKAL. Residues 75-79 are necessary for interaction with RXRA and repressor activity against RXRA; the sequence is LKDLL. An Orange domain is found at 142-175; it reads FCSGFQTCAREVLQYLAKHENTRDLKSSQLVTHL. Lys-159 is covalently cross-linked (Glycyl lysine isopeptide (Lys-Gly) (interchain with G-Cter in SUMO1, SUMO2 and SUMO3)). A Glycyl lysine isopeptide (Lys-Gly) (interchain with G-Cter in SUMO2) cross-link involves residue Lys-167. 2 disordered regions span residues 182 to 256 and 279 to 298; these read LLQG…ELRV and KQESEEPPMKKSRMQLSDDE. Phosphoserine is present on Ser-235. Lys-279 is covalently cross-linked (Glycyl lysine isopeptide (Lys-Gly) (interchain with G-Cter in SUMO1); alternate). Residue Lys-279 forms a Glycyl lysine isopeptide (Lys-Gly) (interchain with G-Cter in SUMO1, SUMO2 and SUMO3); alternate linkage. Residue Lys-279 forms a Glycyl lysine isopeptide (Lys-Gly) (interchain with G-Cter in SUMO2); alternate linkage. Residue Lys-288 forms a Glycyl lysine isopeptide (Lys-Gly) (interchain with G-Cter in SUMO2) linkage. The residue at position 383 (Ser-383) is a Phosphoserine.

Homodimer. Heterodimer with BHLHE41/DEC2. Interacts with TCF3/E47. Interacts with ubiquitin-conjugating enzyme UBE2I/UBC9. Interacts with HDAC1, SUMO1, RXRA and BMAL1. Post-translationally, ubiquitinated; which may lead to proteasomal degradation. In terms of processing, sumoylation inhibits its ubiquitination and promotes its negative regulation of the CLOCK-BMAL1 heterodimer transcriptional activator activity.

The protein localises to the cytoplasm. The protein resides in the nucleus. Transcriptional repressor involved in the regulation of the circadian rhythm by negatively regulating the activity of the clock genes and clock-controlled genes. Acts as the negative limb of a novel autoregulatory feedback loop (DEC loop) which differs from the one formed by the PER and CRY transcriptional repressors (PER/CRY loop). Both these loops are interlocked as it represses the expression of PER1/2 and in turn is repressed by PER1/2 and CRY1/2. Represses the activity of the circadian transcriptional activator: CLOCK-BMAL1|BMAL2 heterodimer by competing for the binding to E-box elements (5'-CACGTG-3') found within the promoters of its target genes. Negatively regulates its own expression and the expression of DBP and BHLHE41/DEC2. Acts as a corepressor of RXR and the RXR-LXR heterodimers and represses the ligand-induced RXRA and NR1H3/LXRA transactivation activity. May be involved in the regulation of chondrocyte differentiation via the cAMP pathway. Represses the transcription of NR0B2 and attentuates the transactivation of NR0B2 by the CLOCK-BMAL1 complex. Drives the circadian rhythm of blood pressure through transcriptional repression of ATP1B1 in the cardiovascular system. The chain is Class E basic helix-loop-helix protein 40 (BHLHE40) from Bos taurus (Bovine).